Here is a 154-residue protein sequence, read N- to C-terminus: Myoglobin (154 aa).

The 147-residue stretch at Val-2–Lys-148 folds into the Globin domain. Ser-4 is modified (phosphoserine). His-65 provides a ligand contact to nitrite. His-65 lines the O2 pocket. Residue Thr-68 is modified to Phosphothreonine. His-94 serves as a coordination point for heme b.

This sequence belongs to the globin family. In terms of assembly, monomeric.

It is found in the cytoplasm. The protein resides in the sarcoplasm. It catalyses the reaction Fe(III)-heme b-[protein] + nitric oxide + H2O = Fe(II)-heme b-[protein] + nitrite + 2 H(+). The catalysed reaction is H2O2 + AH2 = A + 2 H2O. Its function is as follows. Monomeric heme protein which primary function is to store oxygen and facilitate its diffusion within muscle tissues. Reversibly binds oxygen through a pentacoordinated heme iron and enables its timely and efficient release as needed during periods of heightened demand. Depending on the oxidative conditions of tissues and cells, and in addition to its ability to bind oxygen, it also has a nitrite reductase activity whereby it regulates the production of bioactive nitric oxide. Under stress conditions, like hypoxia and anoxia, it also protects cells against reactive oxygen species thanks to its pseudoperoxidase activity. The polypeptide is Myoglobin (MB) (Balaenoptera acutorostrata (Common minke whale)).